A 180-amino-acid polypeptide reads, in one-letter code: Small ribosomal subunit protein bS16 (180 aa).

Belongs to the bacterial ribosomal protein bS16 family.

The polypeptide is Small ribosomal subunit protein bS16 (Flavobacterium psychrophilum (strain ATCC 49511 / DSM 21280 / CIP 103535 / JIP02/86)).